The following is a 500-amino-acid chain: Cytochrome P450 2D26 (500 aa).

The residue at position 249 (Ser249) is a Phosphoserine. Cys446 is a heme binding site.

The protein belongs to the cytochrome P450 family. Requires heme as cofactor.

Its subcellular location is the endoplasmic reticulum membrane. It localises to the microsome membrane. The catalysed reaction is an organic molecule + reduced [NADPH--hemoprotein reductase] + O2 = an alcohol + oxidized [NADPH--hemoprotein reductase] + H2O + H(+). In terms of biological role, cytochromes P450 are a group of heme-thiolate monooxygenases. In liver microsomes, this enzyme is involved in an NADPH-dependent electron transport pathway. It oxidizes a variety of structurally unrelated compounds, including steroids, fatty acids, and xenobiotics. The sequence is that of Cytochrome P450 2D26 (Cyp2d26) from Rattus norvegicus (Rat).